Consider the following 343-residue polypeptide: Protease inhibitor Egf1.5a (343 aa).

Positions 1–28 are cleaved as a signal peptide; it reads MYIDTGIMSNNIFLFAFFALVGLTRIEA. In terms of domain architecture, TIL spans 52 to 104; that stretch reads CRENEHYNSTRIECEDECNDRNNKLCYRFQQFCWCNEGYIRNSSHICVKLEDC.

This sequence belongs to the polydnaviridae EGF-like motif protein family. Interacts with host PAP1, PAP3 and SPH2.

Counteracts the host humoral immune response by inhibiting the processing and the amidolytic activity of host PAP1 and PAP3. Thereby, melanization of host hemolymph, normally producing several reactive intermediates toxic for viruses, is deregulated and proper immune response cannot occur. The protein is Protease inhibitor Egf1.5a (O1) of Microplitis demolitor bracovirus (isolate Webb) (MdBV).